Here is a 557-residue protein sequence, read N- to C-terminus: Urocanate hydratase (557 aa).

NAD(+)-binding positions include 53-54, Gln-131, 177-179, Glu-197, Arg-202, 243-244, 264-268, 274-275, and Tyr-323; these read GG, GMG, NA, QTSAH, and YL. Cys-411 is an active-site residue. Residue Gly-493 participates in NAD(+) binding.

This sequence belongs to the urocanase family. NAD(+) is required as a cofactor.

It is found in the cytoplasm. The catalysed reaction is 4-imidazolone-5-propanoate = trans-urocanate + H2O. It participates in amino-acid degradation; L-histidine degradation into L-glutamate; N-formimidoyl-L-glutamate from L-histidine: step 2/3. Catalyzes the conversion of urocanate to 4-imidazolone-5-propionate. The chain is Urocanate hydratase from Pseudomonas putida (strain GB-1).